We begin with the raw amino-acid sequence, 212 residues long: Anaphase-promoting complex subunit 10 (212 aa).

Residues 12 to 196 (MDEEERTSSR…PSAVLEARPG (185 aa)) enclose the DOC domain.

Belongs to the APC10 family. In terms of assembly, the APC/C complex is probably composed of at least 12 subunits: apc-2, apc-10, apc-11, cdc-26, emb-1, emb-27, emb-30, mat-1, mat-2, mat-3, such-1 and gfi-3.

Its pathway is protein modification; protein ubiquitination. In terms of biological role, probable component of the anaphase promoting complex/cyclosome (APC/C), a cell cycle-regulated E3 ubiquitin ligase that controls progression through mitosis and the G1 phase of the cell cycle. The APC/C complex acts by mediating ubiquitination and subsequent degradation of target proteins. This chain is Anaphase-promoting complex subunit 10, found in Caenorhabditis elegans.